The chain runs to 402 residues: 4-hydroxy-3-methylbut-2-enyl diphosphate reductase (402 aa).

Cysteine 66 is a [4Fe-4S] cluster binding site. Histidine 96 lines the (2E)-4-hydroxy-3-methylbut-2-enyl diphosphate pocket. A dimethylallyl diphosphate-binding site is contributed by histidine 96. Residue histidine 96 participates in isopentenyl diphosphate binding. [4Fe-4S] cluster is bound at residue cysteine 157. Residue histidine 185 participates in (2E)-4-hydroxy-3-methylbut-2-enyl diphosphate binding. Histidine 185 contributes to the dimethylallyl diphosphate binding site. Histidine 185 is a binding site for isopentenyl diphosphate. Glutamate 187 serves as the catalytic Proton donor. Threonine 250 contacts (2E)-4-hydroxy-3-methylbut-2-enyl diphosphate. Cysteine 288 lines the [4Fe-4S] cluster pocket. Serine 317, serine 318, asparagine 319, and serine 379 together coordinate (2E)-4-hydroxy-3-methylbut-2-enyl diphosphate. The dimethylallyl diphosphate site is built by serine 317, serine 318, asparagine 319, and serine 379. Positions 317, 318, 319, and 379 each coordinate isopentenyl diphosphate.

It belongs to the IspH family. [4Fe-4S] cluster serves as cofactor.

The catalysed reaction is isopentenyl diphosphate + 2 oxidized [2Fe-2S]-[ferredoxin] + H2O = (2E)-4-hydroxy-3-methylbut-2-enyl diphosphate + 2 reduced [2Fe-2S]-[ferredoxin] + 2 H(+). The enzyme catalyses dimethylallyl diphosphate + 2 oxidized [2Fe-2S]-[ferredoxin] + H2O = (2E)-4-hydroxy-3-methylbut-2-enyl diphosphate + 2 reduced [2Fe-2S]-[ferredoxin] + 2 H(+). It functions in the pathway isoprenoid biosynthesis; dimethylallyl diphosphate biosynthesis; dimethylallyl diphosphate from (2E)-4-hydroxy-3-methylbutenyl diphosphate: step 1/1. Its pathway is isoprenoid biosynthesis; isopentenyl diphosphate biosynthesis via DXP pathway; isopentenyl diphosphate from 1-deoxy-D-xylulose 5-phosphate: step 6/6. Functionally, catalyzes the conversion of 1-hydroxy-2-methyl-2-(E)-butenyl 4-diphosphate (HMBPP) into a mixture of isopentenyl diphosphate (IPP) and dimethylallyl diphosphate (DMAPP). Acts in the terminal step of the DOXP/MEP pathway for isoprenoid precursor biosynthesis. The sequence is that of 4-hydroxy-3-methylbut-2-enyl diphosphate reductase from Gloeothece citriformis (strain PCC 7424) (Cyanothece sp. (strain PCC 7424)).